The primary structure comprises 384 residues: Carbamoyl phosphate synthase small chain (384 aa).

Positions 1 to 193 are CPSase; it reads MTKPATTPAI…DSHPEIPASE (193 aa). Residues Ser-51, Gly-245, and Gly-247 each contribute to the L-glutamine site. In terms of domain architecture, Glutamine amidotransferase type-1 spans 197–384; sequence HVVAYDYGVK…ISAMAPVVDR (188 aa). Residue Cys-273 is the Nucleophile of the active site. Residues Leu-274, Gln-277, Asn-315, Gly-317, and Phe-318 each coordinate L-glutamine. Residues His-357 and Glu-359 contribute to the active site.

Belongs to the CarA family. As to quaternary structure, composed of two chains; the small (or glutamine) chain promotes the hydrolysis of glutamine to ammonia, which is used by the large (or ammonia) chain to synthesize carbamoyl phosphate. Tetramer of heterodimers (alpha,beta)4.

The catalysed reaction is hydrogencarbonate + L-glutamine + 2 ATP + H2O = carbamoyl phosphate + L-glutamate + 2 ADP + phosphate + 2 H(+). The enzyme catalyses L-glutamine + H2O = L-glutamate + NH4(+). Its pathway is amino-acid biosynthesis; L-arginine biosynthesis; carbamoyl phosphate from bicarbonate: step 1/1. It functions in the pathway pyrimidine metabolism; UMP biosynthesis via de novo pathway; (S)-dihydroorotate from bicarbonate: step 1/3. In terms of biological role, small subunit of the glutamine-dependent carbamoyl phosphate synthetase (CPSase). CPSase catalyzes the formation of carbamoyl phosphate from the ammonia moiety of glutamine, carbonate, and phosphate donated by ATP, constituting the first step of 2 biosynthetic pathways, one leading to arginine and/or urea and the other to pyrimidine nucleotides. The small subunit (glutamine amidotransferase) binds and cleaves glutamine to supply the large subunit with the substrate ammonia. The polypeptide is Carbamoyl phosphate synthase small chain (Stutzerimonas stutzeri (Pseudomonas stutzeri)).